Reading from the N-terminus, the 307-residue chain is Fructokinase (307 aa).

The protein belongs to the carbohydrate kinase PfkB family.

It carries out the reaction D-fructose + ATP = D-fructose 6-phosphate + ADP + H(+). The protein is Fructokinase (cscK) of Escherichia coli.